The primary structure comprises 230 residues: Complex I assembly factor TMEM126B, mitochondrial (230 aa).

4 consecutive transmembrane segments (helical) span residues 70-92, 107-126, 139-161, and 196-218; these read LNIH…ANLV, YASL…KLFV, SCVL…ALAF, and AMAI…HYNI.

It belongs to the TMEM126 family. As to quaternary structure, part of the mitochondrial complex I assembly/MCIA complex that comprises at least the core subunits TMEM126B, NDUFAF1, ECSIT and ACAD9 and complement subunits such as COA1 and TMEM186. Associates with the intermediate 370 kDa subcomplex of incompletely assembled complex I. Interacts with TMEM70.

It localises to the mitochondrion membrane. Functionally, as part of the MCIA complex, involved in the assembly of the mitochondrial complex I. Participates in constructing the membrane arm of complex I. The chain is Complex I assembly factor TMEM126B, mitochondrial from Mus musculus (Mouse).